Reading from the N-terminus, the 177-residue chain is Large ribosomal subunit protein bL17 (177 aa).

The tract at residues 136–177 (AEEEAPAVEAEATEAVEAPVEETAAAEAEAPAEEAADAEKAE) is disordered. Residues 138–149 (EEAPAVEAEATE) are compositionally biased toward acidic residues. Residues 150-164 (AVEAPVEETAAAEAE) show a composition bias toward low complexity.

It belongs to the bacterial ribosomal protein bL17 family. In terms of assembly, part of the 50S ribosomal subunit. Contacts protein L32.

The sequence is that of Large ribosomal subunit protein bL17 from Bifidobacterium longum (strain NCC 2705).